Reading from the N-terminus, the 69-residue chain is Cytochrome c oxidase subunit 8A, mitochondrial (69 aa).

The N-terminal 25 residues, 1-25 (MSVLTPLLLRGLTGSARRLPVPRAK), are a transit peptide targeting the mitochondrion. The SIFI-degron motif lies at 2-19 (SVLTPLLLRGLTGSARRL). Topologically, residues 26-36 (IHSLPPEGKLG) are mitochondrial matrix. The chain crosses the membrane as a helical span at residues 37–60 (IMELAVGLTSCFVTFLLPAGWILS). Over 61-69 (HLETYRRPE) the chain is Mitochondrial intermembrane.

It belongs to the cytochrome c oxidase VIII family. Component of the cytochrome c oxidase (complex IV, CIV), a multisubunit enzyme composed of 14 subunits. The complex is composed of a catalytic core of 3 subunits MT-CO1, MT-CO2 and MT-CO3, encoded in the mitochondrial DNA, and 11 supernumerary subunits COX4I1 (or COX4I2), COX5A, COX5B, COX6A1 (or COX6A2), COX6B1 (or COX6B2), COX6C, COX7A2 (or COX7A1), COX7B, COX7C, COX8A and NDUFA4, which are encoded in the nuclear genome. The complex exists as a monomer or a dimer and forms supercomplexes (SCs) in the inner mitochondrial membrane with NADH-ubiquinone oxidoreductase (complex I, CI) and ubiquinol-cytochrome c oxidoreductase (cytochrome b-c1 complex, complex III, CIII), resulting in different assemblies (supercomplex SCI(1)III(2)IV(1) and megacomplex MCI(2)III(2)IV(2)). Post-translationally, in response to mitochondrial stress, the precursor protein is ubiquitinated by the SIFI complex in the cytoplasm before mitochondrial import, leading to its degradation. Within the SIFI complex, UBR4 initiates ubiquitin chain that are further elongated or branched by KCMF1. In terms of tissue distribution, widely expressed.

Its subcellular location is the mitochondrion inner membrane. It functions in the pathway energy metabolism; oxidative phosphorylation. In terms of biological role, component of the cytochrome c oxidase, the last enzyme in the mitochondrial electron transport chain which drives oxidative phosphorylation. The respiratory chain contains 3 multisubunit complexes succinate dehydrogenase (complex II, CII), ubiquinol-cytochrome c oxidoreductase (cytochrome b-c1 complex, complex III, CIII) and cytochrome c oxidase (complex IV, CIV), that cooperate to transfer electrons derived from NADH and succinate to molecular oxygen, creating an electrochemical gradient over the inner membrane that drives transmembrane transport and the ATP synthase. Cytochrome c oxidase is the component of the respiratory chain that catalyzes the reduction of oxygen to water. Electrons originating from reduced cytochrome c in the intermembrane space (IMS) are transferred via the dinuclear copper A center (CU(A)) of subunit 2 and heme A of subunit 1 to the active site in subunit 1, a binuclear center (BNC) formed by heme A3 and copper B (CU(B)). The BNC reduces molecular oxygen to 2 water molecules using 4 electrons from cytochrome c in the IMS and 4 protons from the mitochondrial matrix. This chain is Cytochrome c oxidase subunit 8A, mitochondrial (COX8A), found in Homo sapiens (Human).